Here is a 98-residue protein sequence, read N- to C-terminus: NADH-ubiquinone oxidoreductase chain 4L (98 aa).

The next 3 helical transmembrane spans lie at M1–M21, S29–L49, and I61–V81.

This sequence belongs to the complex I subunit 4L family. In terms of assembly, core subunit of respiratory chain NADH dehydrogenase (Complex I) which is composed of 45 different subunits.

Its subcellular location is the mitochondrion inner membrane. It carries out the reaction a ubiquinone + NADH + 5 H(+)(in) = a ubiquinol + NAD(+) + 4 H(+)(out). In terms of biological role, core subunit of the mitochondrial membrane respiratory chain NADH dehydrogenase (Complex I) which catalyzes electron transfer from NADH through the respiratory chain, using ubiquinone as an electron acceptor. Part of the enzyme membrane arm which is embedded in the lipid bilayer and involved in proton translocation. The chain is NADH-ubiquinone oxidoreductase chain 4L (MT-ND4L) from Monachus monachus (Mediterranean monk seal).